A 140-amino-acid polypeptide reads, in one-letter code: Relaxin-3 (140 aa).

The first 26 residues, Met1–Ala26, serve as a signal peptide directing secretion. 3 disulfides stabilise this stretch: Cys36–Cys127, Cys48–Cys140, and Cys126–Cys131. A propeptide spans Ser56–Arg116 (connecting peptide).

It belongs to the insulin family. Heterodimer of a B chain and an A chain linked by two disulfide bonds.

The protein resides in the secreted. Functionally, may play a role in neuropeptide signaling processes. Ligand for LGR7, RXFP3 and RXFP4. This Sus scrofa (Pig) protein is Relaxin-3 (RLN3).